The sequence spans 260 residues: Tropinone reductase 2 (260 aa).

13–37 is an NADP(+) binding site; the sequence is LVTGGSRGIGYGIVEELANLGASVY. Position 146 (serine 146) interacts with substrate. Tyrosine 159 acts as the Proton acceptor in catalysis.

Belongs to the short-chain dehydrogenases/reductases (SDR) family.

It catalyses the reaction pseudotropine + NADP(+) = tropinone + NADPH + H(+). It participates in alkaloid biosynthesis; tropane alkaloid biosynthesis. In terms of biological role, catalyzes the stereospecific reduction of tropinone to pseudotropine. The sequence is that of Tropinone reductase 2 (TR2) from Hyoscyamus niger (Black henbane).